Here is a 206-residue protein sequence, read N- to C-terminus: Large ribosomal subunit protein uL4 (206 aa).

Residues 62-85 (KPWRQKGTGRARQGSTRSPQFRGG) form a disordered region.

It belongs to the universal ribosomal protein uL4 family. In terms of assembly, part of the 50S ribosomal subunit.

In terms of biological role, one of the primary rRNA binding proteins, this protein initially binds near the 5'-end of the 23S rRNA. It is important during the early stages of 50S assembly. It makes multiple contacts with different domains of the 23S rRNA in the assembled 50S subunit and ribosome. Functionally, forms part of the polypeptide exit tunnel. The sequence is that of Large ribosomal subunit protein uL4 from Rhodospirillum centenum (strain ATCC 51521 / SW).